We begin with the raw amino-acid sequence, 360 residues long: 3-dehydroquinate synthase (360 aa).

NAD(+) is bound by residues aspartate 71–lysine 76, glycine 105–aspartate 109, threonine 129–threonine 130, lysine 142, lysine 151, and phenylalanine 169–threonine 172. Glutamate 184, histidine 247, and histidine 264 together coordinate Zn(2+).

This sequence belongs to the sugar phosphate cyclases superfamily. Dehydroquinate synthase family. Requires NAD(+) as cofactor. It depends on Co(2+) as a cofactor. The cofactor is Zn(2+).

The protein localises to the cytoplasm. The enzyme catalyses 7-phospho-2-dehydro-3-deoxy-D-arabino-heptonate = 3-dehydroquinate + phosphate. It functions in the pathway metabolic intermediate biosynthesis; chorismate biosynthesis; chorismate from D-erythrose 4-phosphate and phosphoenolpyruvate: step 2/7. Its function is as follows. Catalyzes the conversion of 3-deoxy-D-arabino-heptulosonate 7-phosphate (DAHP) to dehydroquinate (DHQ). This chain is 3-dehydroquinate synthase, found in Buchnera aphidicola subsp. Schizaphis graminum (strain Sg).